The primary structure comprises 149 residues: Large ribosomal subunit protein bL9 (149 aa).

Belongs to the bacterial ribosomal protein bL9 family.

In terms of biological role, binds to the 23S rRNA. The sequence is that of Large ribosomal subunit protein bL9 from Desulforamulus reducens (strain ATCC BAA-1160 / DSM 100696 / MI-1) (Desulfotomaculum reducens).